A 114-amino-acid chain; its full sequence is MTDLDHRYPGEETEPYGPPSGSLADLLERVLDKGIVIAGDIKIDLLDIELLTIRLRLFIASVDTAKKAGIDWWETDPALSSRAARDALAEENARLRERLDALEGAAGETTGAVR.

Positions 1–10 (MTDLDHRYPG) are enriched in basic and acidic residues. The disordered stretch occupies residues 1-21 (MTDLDHRYPGEETEPYGPPSG).

This sequence belongs to the gas vesicle GvpA family. In terms of assembly, interacts with GvpA.

The protein resides in the gas vesicle. Functionally, a minor component of the gas vesicle, might be involved in nucleating gas vesicle formation. Gas vesicles (GV) are hollow, gas filled proteinaceous nanostructures. It is not clear what function GVs perform in soil bacteria. The polypeptide is Probable gas vesicle protein J2 (Streptomyces coelicolor (strain ATCC BAA-471 / A3(2) / M145)).